Reading from the N-terminus, the 132-residue chain is Small ribosomal subunit protein uS8 (132 aa).

Belongs to the universal ribosomal protein uS8 family. Part of the 30S ribosomal subunit. Contacts proteins S5 and S12.

One of the primary rRNA binding proteins, it binds directly to 16S rRNA central domain where it helps coordinate assembly of the platform of the 30S subunit. In Borrelia hermsii (strain HS1 / DAH), this protein is Small ribosomal subunit protein uS8.